Here is a 403-residue protein sequence, read N- to C-terminus: Phosphopentomutase (403 aa).

Mn(2+) contacts are provided by aspartate 13, aspartate 298, histidine 303, aspartate 339, histidine 340, and histidine 351.

The protein belongs to the phosphopentomutase family. Requires Mn(2+) as cofactor.

The protein resides in the cytoplasm. The catalysed reaction is 2-deoxy-alpha-D-ribose 1-phosphate = 2-deoxy-D-ribose 5-phosphate. The enzyme catalyses alpha-D-ribose 1-phosphate = D-ribose 5-phosphate. It functions in the pathway carbohydrate degradation; 2-deoxy-D-ribose 1-phosphate degradation; D-glyceraldehyde 3-phosphate and acetaldehyde from 2-deoxy-alpha-D-ribose 1-phosphate: step 1/2. Its function is as follows. Isomerase that catalyzes the conversion of deoxy-ribose 1-phosphate (dRib-1-P) and ribose 1-phosphate (Rib-1-P) to deoxy-ribose 5-phosphate (dRib-5-P) and ribose 5-phosphate (Rib-5-P), respectively. This is Phosphopentomutase from Streptococcus thermophilus (strain CNRZ 1066).